Consider the following 306-residue polypeptide: MHGHFNGLKTTLLFALMWAIIMLIWWATGGSRQTLSIYIVIGLITTFGTYWFSDKLAIASMGAREVSEQEAPEIYQIVRELSAKAGKPMPRIYIAPTMSPNAFATGRNERHAAVCCTQGILQILNARELRGVLGHELMHVYNHDILTSAIASAMATVISYLGYSLMYFGGGSRDDRDSSGGLGLIGALLSVILAPIAASLIQMAISRTREYDADEDGSLLTGDPEALASALNKISYGAQTTPMRKTAGTQSVSAMMIANPFSAVGFSRLFSTHPPTDERIARLMQMANEMNGTPIAPPTYSTRVGR.

2 helical membrane-spanning segments follow: residues 10-30 and 33-53; these read TTLL…ATGG and QTLS…YWFS. His-135 contributes to the Zn(2+) binding site. Glu-136 is a catalytic residue. His-139 serves as a coordination point for Zn(2+). 2 helical membrane passes run 149–169 and 181–201; these read AIAS…MYFG and GLGL…ASLI. Position 210 (Glu-210) interacts with Zn(2+).

It belongs to the peptidase M48B family. The cofactor is Zn(2+).

The protein resides in the cell membrane. The sequence is that of Protease HtpX homolog from Bifidobacterium longum (strain NCC 2705).